The following is a 468-amino-acid chain: Cysteine--tRNA ligase (468 aa).

Position 28 (Cys-28) interacts with Zn(2+). The short motif at 30–40 (PTVYNYIHIGN) is the 'HIGH' region element. Residues Cys-212, His-237, and Glu-241 each coordinate Zn(2+). A 'KMSKS' region motif is present at residues 271–275 (KMSKS). An ATP-binding site is contributed by Lys-274.

The protein belongs to the class-I aminoacyl-tRNA synthetase family. Monomer. Requires Zn(2+) as cofactor.

It is found in the cytoplasm. It catalyses the reaction tRNA(Cys) + L-cysteine + ATP = L-cysteinyl-tRNA(Cys) + AMP + diphosphate. The chain is Cysteine--tRNA ligase from Latilactobacillus sakei subsp. sakei (strain 23K) (Lactobacillus sakei subsp. sakei).